The sequence spans 334 residues: Tryptophan--tRNA ligase (334 aa).

ATP-binding positions include 12-14 (QPS) and 20-21 (GN). The 'HIGH' region signature appears at 13–21 (PSGIPTLGN). Residue Asp-136 participates in L-tryptophan binding. ATP contacts are provided by residues 148–150 (GKD), Ile-187, and 196–200 (KMSKS). Positions 196-200 (KMSKS) match the 'KMSKS' region motif.

Belongs to the class-I aminoacyl-tRNA synthetase family. As to quaternary structure, homodimer.

The protein resides in the cytoplasm. It catalyses the reaction tRNA(Trp) + L-tryptophan + ATP = L-tryptophyl-tRNA(Trp) + AMP + diphosphate + H(+). In terms of biological role, catalyzes the attachment of tryptophan to tRNA(Trp). This Wigglesworthia glossinidia brevipalpis protein is Tryptophan--tRNA ligase.